The chain runs to 72 residues: AGEECDCGSPANPCCDAATCKLRPGAQCADGLCCDQCRFIKKGTVCRPARGDWNDDTCTGQSADCPRNGLYG.

A Disintegrin domain is found at 1-72; sequence AGEECDCGSP…ADCPRNGLYG (72 aa). 6 disulfides stabilise this stretch: Cys5/Cys20, Cys7/Cys15, Cys14/Cys37, Cys28/Cys34, Cys33/Cys58, and Cys46/Cys65. The short motif at 50 to 52 is the Cell attachment site element; it reads RGD.

Belongs to the venom metalloproteinase (M12B) family. P-II subfamily. P-IIa sub-subfamily. In terms of assembly, monomer. As to expression, expressed by the venom gland.

It localises to the secreted. Inhibits fibrinogen interaction with platelets. Acts by binding to the alpha-IIb/beta-3 (ITGA2B/ITGB3) on the platelet surface and inhibits aggregation induced by ADP, thrombin, platelet-activating factor and collagen. Its function is as follows. Inhibits ADP-induced platelet aggregation (IC(50) = 17.5nM), cancer cell migration in vitro, and experimental lung tumor colonization of cancer cells. The sequence is that of Disintegrin crotatroxin from Crotalus atrox (Western diamondback rattlesnake).